The chain runs to 226 residues: Phosphatidylserine decarboxylase proenzyme (226 aa).

Serine 184 (schiff-base intermediate with substrate; via pyruvic acid) is an active-site residue. Serine 184 carries the pyruvic acid (Ser); by autocatalysis modification.

The protein belongs to the phosphatidylserine decarboxylase family. PSD-A subfamily. Heterodimer of a large membrane-associated beta subunit and a small pyruvoyl-containing alpha subunit. The cofactor is pyruvate. Post-translationally, is synthesized initially as an inactive proenzyme. Formation of the active enzyme involves a self-maturation process in which the active site pyruvoyl group is generated from an internal serine residue via an autocatalytic post-translational modification. Two non-identical subunits are generated from the proenzyme in this reaction, and the pyruvate is formed at the N-terminus of the alpha chain, which is derived from the carboxyl end of the proenzyme. The post-translation cleavage follows an unusual pathway, termed non-hydrolytic serinolysis, in which the side chain hydroxyl group of the serine supplies its oxygen atom to form the C-terminus of the beta chain, while the remainder of the serine residue undergoes an oxidative deamination to produce ammonia and the pyruvoyl prosthetic group on the alpha chain.

It is found in the cell membrane. It carries out the reaction a 1,2-diacyl-sn-glycero-3-phospho-L-serine + H(+) = a 1,2-diacyl-sn-glycero-3-phosphoethanolamine + CO2. It participates in phospholipid metabolism; phosphatidylethanolamine biosynthesis; phosphatidylethanolamine from CDP-diacylglycerol: step 2/2. Its function is as follows. Catalyzes the formation of phosphatidylethanolamine (PtdEtn) from phosphatidylserine (PtdSer). This chain is Phosphatidylserine decarboxylase proenzyme, found in Ehrlichia chaffeensis (strain ATCC CRL-10679 / Arkansas).